Consider the following 359-residue polypeptide: Holliday junction branch migration complex subunit RuvB (359 aa).

A large ATPase domain (RuvB-L) region spans residues 1-187; it reads MSGLEHGDAS…FGFTAHLEFY (187 aa). ATP contacts are provided by residues Leu-26, Arg-27, Gly-68, Lys-71, Thr-72, Thr-73, 134–136, Arg-177, Tyr-187, and Arg-224; that span reads EDY. Thr-72 is a Mg(2+) binding site. The interval 188–257 is small ATPAse domain (RuvB-S); the sequence is ETHELEQVIE…SVRAALDLYD (70 aa). The tract at residues 260 to 359 is head domain (RuvB-H); the sequence is PLGLDRLDRA…VAGALFGDEL (100 aa). Residues Arg-315 and Arg-320 each coordinate DNA.

The protein belongs to the RuvB family. As to quaternary structure, homohexamer. Forms an RuvA(8)-RuvB(12)-Holliday junction (HJ) complex. HJ DNA is sandwiched between 2 RuvA tetramers; dsDNA enters through RuvA and exits via RuvB. An RuvB hexamer assembles on each DNA strand where it exits the tetramer. Each RuvB hexamer is contacted by two RuvA subunits (via domain III) on 2 adjacent RuvB subunits; this complex drives branch migration. In the full resolvosome a probable DNA-RuvA(4)-RuvB(12)-RuvC(2) complex forms which resolves the HJ.

It is found in the cytoplasm. It catalyses the reaction ATP + H2O = ADP + phosphate + H(+). The RuvA-RuvB-RuvC complex processes Holliday junction (HJ) DNA during genetic recombination and DNA repair, while the RuvA-RuvB complex plays an important role in the rescue of blocked DNA replication forks via replication fork reversal (RFR). RuvA specifically binds to HJ cruciform DNA, conferring on it an open structure. The RuvB hexamer acts as an ATP-dependent pump, pulling dsDNA into and through the RuvAB complex. RuvB forms 2 homohexamers on either side of HJ DNA bound by 1 or 2 RuvA tetramers; 4 subunits per hexamer contact DNA at a time. Coordinated motions by a converter formed by DNA-disengaged RuvB subunits stimulates ATP hydrolysis and nucleotide exchange. Immobilization of the converter enables RuvB to convert the ATP-contained energy into a lever motion, pulling 2 nucleotides of DNA out of the RuvA tetramer per ATP hydrolyzed, thus driving DNA branch migration. The RuvB motors rotate together with the DNA substrate, which together with the progressing nucleotide cycle form the mechanistic basis for DNA recombination by continuous HJ branch migration. Branch migration allows RuvC to scan DNA until it finds its consensus sequence, where it cleaves and resolves cruciform DNA. This Clavibacter michiganensis subsp. michiganensis (strain NCPPB 382) protein is Holliday junction branch migration complex subunit RuvB.